Consider the following 189-residue polypeptide: Probable pericyclase scpY (189 aa).

This sequence belongs to the pericyclase pydY family.

It participates in mycotoxin biosynthesis. In terms of biological role, probable pericyclase; part of the gene scp cluster that mediates the biosynthesis of a hirsutellone-like compound that has still to be identified. The polypeptide is Probable pericyclase scpY (Mollisia scopiformis (Conifer needle endophyte fungus)).